The chain runs to 862 residues: Rab GTPase-binding effector protein 1 (862 aa).

N-acetylalanine is present on Ala-2. The stretch at 11-345 forms a coiled coil; the sequence is DVSLQQRVAE…KKADVEEEIK (335 aa). Lys-282 carries the N6-acetyllysine modification. Positions 315–338 are disordered; sequence ELKKKDQEDDEQQRLNKRKDHKKA. A phosphoserine mark is found at Ser-374, Ser-377, and Ser-407. Position 408 is a phosphothreonine (Thr-408). Residue Ser-410 is modified to Phosphoserine. The interval 435–447 is interaction with AP1G1, AP1G2, GGA1, GGA2 and GGA3; the sequence is DESDFGPLVGADS. The stretch at 534–816 forms a coiled coil; it reads DMCSNYEKQL…LQTELDVSEQ (283 aa).

The protein belongs to the rabaptin family. Homodimer when bound to RAB5A. Heterodimer with RABGEF1. The heterodimer binds RAB4A and RAB5A that have been activated by GTP-binding. Interacts with TSC2. Interacts with GGA1 (via GAE domain), GGA2 (via GAE domain) and GGA3 (via GAE domain). Interacts with AP1G1 (via GAE domain). Interacts with AP1G2 (via GAE domain). Interacts with ECPAS. Interacts with KCNH1. Interacts with PKD1 (via C-terminal domain) and GGA1; the interactions recruit PKD1:PKD2 complex to GGA1 and ARL3 at trans-Golgi network. In terms of processing, proteolytic cleavage by caspases in apoptotic cells causes loss of endosome fusion activity.

It is found in the cytoplasm. It localises to the early endosome. The protein localises to the recycling endosome. The protein resides in the cytoplasmic vesicle. Functionally, rab effector protein acting as linker between gamma-adaptin, RAB4A and RAB5A. Involved in endocytic membrane fusion and membrane trafficking of recycling endosomes. Involved in KCNH1 channels trafficking to and from the cell membrane. Stimulates RABGEF1 mediated nucleotide exchange on RAB5A. Mediates the traffic of PKD1:PKD2 complex from the endoplasmic reticulum through the Golgi to the cilium. The sequence is that of Rab GTPase-binding effector protein 1 (RABEP1) from Homo sapiens (Human).